The sequence spans 276 residues: Bifunctional protein FolD (276 aa).

NADP(+)-binding positions include asparagine 157–serine 159, serine 182, and isoleucine 223.

The protein belongs to the tetrahydrofolate dehydrogenase/cyclohydrolase family. Homodimer.

The catalysed reaction is (6R)-5,10-methylene-5,6,7,8-tetrahydrofolate + NADP(+) = (6R)-5,10-methenyltetrahydrofolate + NADPH. It carries out the reaction (6R)-5,10-methenyltetrahydrofolate + H2O = (6R)-10-formyltetrahydrofolate + H(+). Its pathway is one-carbon metabolism; tetrahydrofolate interconversion. In terms of biological role, catalyzes the oxidation of 5,10-methylenetetrahydrofolate to 5,10-methenyltetrahydrofolate and then the hydrolysis of 5,10-methenyltetrahydrofolate to 10-formyltetrahydrofolate. In Thermoplasma acidophilum (strain ATCC 25905 / DSM 1728 / JCM 9062 / NBRC 15155 / AMRC-C165), this protein is Bifunctional protein FolD.